We begin with the raw amino-acid sequence, 653 residues long: Acetyl-coenzyme A synthetase (653 aa).

CoA is bound by residues 195-198 (RGGK) and Thr-314. ATP contacts are provided by residues 390 to 392 (GEP), 414 to 419 (DTWWQT), Asp-505, and Arg-520. Residue Ser-528 participates in CoA binding. Residue Arg-531 coordinates ATP. Residues Val-542 and Val-547 each coordinate Mg(2+). Lys-617 bears the N6-acetyllysine mark.

It belongs to the ATP-dependent AMP-binding enzyme family. Requires Mg(2+) as cofactor. Post-translationally, acetylated. Deacetylation by the SIR2-homolog deacetylase activates the enzyme.

It catalyses the reaction acetate + ATP + CoA = acetyl-CoA + AMP + diphosphate. Catalyzes the conversion of acetate into acetyl-CoA (AcCoA), an essential intermediate at the junction of anabolic and catabolic pathways. AcsA undergoes a two-step reaction. In the first half reaction, AcsA combines acetate with ATP to form acetyl-adenylate (AcAMP) intermediate. In the second half reaction, it can then transfer the acetyl group from AcAMP to the sulfhydryl group of CoA, forming the product AcCoA. The polypeptide is Acetyl-coenzyme A synthetase (Pasteurella multocida (strain Pm70)).